The sequence spans 432 residues: Adenylosuccinate synthetase (432 aa).

GTP is bound by residues 13–19 and 41–43; these read GDEGKGK and GHT. Aspartate 14 (proton acceptor) is an active-site residue. Mg(2+) contacts are provided by aspartate 14 and glycine 41. IMP-binding positions include 14–17, 39–42, threonine 130, arginine 144, glutamine 225, threonine 240, and arginine 304; these read DEGK and NAGH. The active-site Proton donor is histidine 42. Residue 300 to 306 coordinates substrate; that stretch reads ATTGRRR. GTP-binding positions include arginine 306, 332 to 334, and 415 to 417; these read KLD and STG.

It belongs to the adenylosuccinate synthetase family. Homodimer. It depends on Mg(2+) as a cofactor.

The protein localises to the cytoplasm. It carries out the reaction IMP + L-aspartate + GTP = N(6)-(1,2-dicarboxyethyl)-AMP + GDP + phosphate + 2 H(+). The protein operates within purine metabolism; AMP biosynthesis via de novo pathway; AMP from IMP: step 1/2. Functionally, plays an important role in the de novo pathway of purine nucleotide biosynthesis. Catalyzes the first committed step in the biosynthesis of AMP from IMP. In Salmonella typhi, this protein is Adenylosuccinate synthetase.